The primary structure comprises 321 residues: Tet-like dioxygenase 1 (321 aa).

Residues 198 to 298 (DSYYALNNCL…RIGLVYFAHK (101 aa)) form the Fe2OG dioxygenase domain. 2-oxoglutarate-binding residues include asparagine 214 and arginine 224. The Fe cation site is built by histidine 229 and aspartate 231. Tyrosine 242 is a 2-oxoglutarate binding site. A Fe cation-binding site is contributed by histidine 279. Arginine 289 is a binding site for 2-oxoglutarate. Glutamine 310 is a substrate binding site.

The cofactor is Fe(2+).

The catalysed reaction is a 5-methyl-2'-deoxycytidine in DNA + 2-oxoglutarate + O2 = a 5-hydroxymethyl-2'-deoxycytidine in DNA + succinate + CO2. It carries out the reaction a 5-hydroxymethyl-2'-deoxycytidine in DNA + 2-oxoglutarate + O2 = a 5-formyl-2'-deoxycytidine in DNA + succinate + CO2 + H2O. The enzyme catalyses a 5-formyl-2'-deoxycytidine in DNA + 2-oxoglutarate + O2 = a 5-carboxyl-2'-deoxycytidine in DNA + succinate + CO2 + H(+). Its function is as follows. Dioxygenase that catalyzes the conversion of the modified genomic base 5-methylcytosine (5mC) into 5-hydroxymethylcytosine (5hmC), and thereby plays a role in active DNA demethylation. Also mediates subsequent conversion of 5hmC into 5-formylcytosine (5fC), and conversion of 5fC to 5-carboxylcytosine (5caC). In Naegleria gruberi (Amoeba), this protein is Tet-like dioxygenase 1.